Reading from the N-terminus, the 856-residue chain is Structure-specific endonuclease subunit SLX4 (856 aa).

Positions 1 to 19 (MDNAAIASQSNTPPSNGRS) are enriched in polar residues. Disordered stretches follow at residues 1 to 24 (MDNA…ARFV), 39 to 61 (IEPS…SKSP), 88 to 121 (VDSP…HKMA), 139 to 201 (KTRK…TDNE), 296 to 326 (GIQT…KKPQ), 362 to 392 (KKMG…GNGP), 621 to 640 (SKSS…SQGD), 653 to 688 (RSDS…SNEG), and 715 to 742 (DSVG…QDCD). Low complexity predominate over residues 51–60 (STLLTSLSKS). Positions 139–152 (KTRKKKAATAKRTR) are enriched in basic residues. Polar residues predominate over residues 296 to 309 (GIQTPTESRPATND). The segment covering 673 to 686 (SVKSQESKSFSLSN) has biased composition (polar residues).

This sequence belongs to the SLX4 family. As to quaternary structure, forms a heterodimer with SLX1. Post-translationally, phosphorylated in response to DNA damage.

The protein localises to the nucleus. Regulatory subunit of the SLX1-SLX4 structure-specific endonuclease that resolves DNA secondary structures generated during DNA repair and recombination. Has endonuclease activity towards branched DNA substrates, introducing single-strand cuts in duplex DNA close to junctions with ss-DNA. In Ajellomyces dermatitidis (strain ER-3 / ATCC MYA-2586) (Blastomyces dermatitidis), this protein is Structure-specific endonuclease subunit SLX4.